The sequence spans 584 residues: Glycosyltransferase family 92 protein Os08g0121900 (584 aa).

Residues 1–10 are compositionally biased toward basic and acidic residues; that stretch reads MALAAKERKL. The tract at residues 1-33 is disordered; that stretch reads MALAAKERKLSRLGSKGSGGGGGGGSFGARGQR. Residues 16-28 show a composition bias toward gly residues; sequence KGSGGGGGGGSFG. The helical transmembrane segment at 43 to 63 threads the bilayer; the sequence is FAAFFAFLFAGAVLFGAAHVI. The region spanning 314–525 is the GT92 domain; the sequence is HSMCVCTMLR…DKFSGRVATY (212 aa).

The protein belongs to the glycosyltransferase 92 family.

The protein resides in the membrane. This chain is Glycosyltransferase family 92 protein Os08g0121900, found in Oryza sativa subsp. japonica (Rice).